Consider the following 798-residue polypeptide: Protocadherin beta-2 (798 aa).

An N-terminal signal peptide occupies residues 1-30 (MEAGEGKERVPKQRQVLIFFVLLGIAQASC). Residues 31 to 692 (QPRHYSVAEE…AQADLLTVYL (662 aa)) lie on the Extracellular side of the membrane. Cadherin domains follow at residues 37 to 135 (VAEE…SPVF), 136 to 244 (LDKE…VPEF), 249 to 349 (YEVQ…PPEL), 354 to 453 (LINQ…APAF), and 458 to 563 (YTLF…SPFV). N-linked (GlcNAc...) asparagine glycosylation occurs at N171. K299 is subject to N6-acetyllysine. N420 and N438 each carry an N-linked (GlcNAc...) asparagine glycan. Residue N569 is glycosylated (N-linked (GlcNAc...) asparagine). The region spanning 570–673 (GSAPCTELVP…LVDGFSQPYL (104 aa)) is the Cadherin 6 domain. Residues 693-713 (VVALASVSSLFLFSVLLFVAV) traverse the membrane as a helical segment. The Cytoplasmic portion of the chain corresponds to 714–798 (RLCRRSRAAS…PSFRKSFEFT (85 aa)).

Its subcellular location is the cell membrane. Its function is as follows. Potential calcium-dependent cell-adhesion protein. May be involved in the establishment and maintenance of specific neuronal connections in the brain. In Homo sapiens (Human), this protein is Protocadherin beta-2 (PCDHB2).